Here is a 245-residue protein sequence, read N- to C-terminus: Ubiquinone/menaquinone biosynthesis C-methyltransferase UbiE (245 aa).

Residues Thr71, Asp92, and 118 to 119 (DA) each bind S-adenosyl-L-methionine.

It belongs to the class I-like SAM-binding methyltransferase superfamily. MenG/UbiE family.

It carries out the reaction a 2-demethylmenaquinol + S-adenosyl-L-methionine = a menaquinol + S-adenosyl-L-homocysteine + H(+). It catalyses the reaction a 2-methoxy-6-(all-trans-polyprenyl)benzene-1,4-diol + S-adenosyl-L-methionine = a 5-methoxy-2-methyl-3-(all-trans-polyprenyl)benzene-1,4-diol + S-adenosyl-L-homocysteine + H(+). It participates in quinol/quinone metabolism; menaquinone biosynthesis; menaquinol from 1,4-dihydroxy-2-naphthoate: step 2/2. Its pathway is cofactor biosynthesis; ubiquinone biosynthesis. Its function is as follows. Methyltransferase required for the conversion of demethylmenaquinol (DMKH2) to menaquinol (MKH2) and the conversion of 2-polyprenyl-6-methoxy-1,4-benzoquinol (DDMQH2) to 2-polyprenyl-3-methyl-6-methoxy-1,4-benzoquinol (DMQH2). The polypeptide is Ubiquinone/menaquinone biosynthesis C-methyltransferase UbiE (Neisseria meningitidis serogroup C / serotype 2a (strain ATCC 700532 / DSM 15464 / FAM18)).